Here is a 1681-residue protein sequence, read N- to C-terminus: Y' element ATP-dependent helicase protein 1 copy 2 (1681 aa).

Residues 683–860 (EIYMADTPSV…LQRIGLTGLA (178 aa)) enclose the Helicase ATP-binding domain. Residue 696-703 (APPGYGKT) coordinates ATP. Residues 917–1066 (KLLLALFEIE…EFYGLESKKG (150 aa)) enclose the Helicase C-terminal domain. The segment covering 1140–1283 (ANASTNATTN…ATTTESTNAS (144 aa)) has biased composition (low complexity). Residues 1140 to 1307 (ANASTNATTN…RFHPVTDINK (168 aa)) form a disordered region. A compositionally biased stretch (basic and acidic residues) spans 1284 to 1307 (AKEDANKDGNAEDNRFHPVTDINK).

Belongs to the helicase family. Yeast subtelomeric Y' repeat subfamily.

Functionally, catalyzes DNA unwinding and is involved in telomerase-independent telomere maintenance. The protein is Y' element ATP-dependent helicase protein 1 copy 2 (YRF1-2) of Saccharomyces cerevisiae (strain ATCC 204508 / S288c) (Baker's yeast).